The primary structure comprises 118 residues: Basic phospholipase A2 PA-5 (118 aa).

Cystine bridges form between C11–C71, C27–C117, C29–C45, C44–C98, C51–C91, C60–C84, and C78–C89. Residues Y28, G30, and G32 each coordinate Ca(2+). H48 is an active-site residue. Ca(2+) is bound at residue D49. Residue D92 is part of the active site.

The protein belongs to the phospholipase A2 family. Group I subfamily. D49 sub-subfamily. It depends on Ca(2+) as a cofactor. As to expression, expressed by the venom gland.

Its subcellular location is the secreted. It carries out the reaction a 1,2-diacyl-sn-glycero-3-phosphocholine + H2O = a 1-acyl-sn-glycero-3-phosphocholine + a fatty acid + H(+). Functionally, PLA2 catalyzes the calcium-dependent hydrolysis of the 2-acyl groups in 3-sn-phosphoglycerides. This chain is Basic phospholipase A2 PA-5, found in Pseudechis australis (Mulga snake).